Consider the following 516-residue polypeptide: D-alanine--D-alanyl carrier protein ligase (516 aa).

Residue 156–157 (TS) participates in ATP binding. D203 contacts D-alanine. 298–303 (NAYGPT) contributes to the ATP binding site. V307 serves as a coordination point for D-alanine. ATP is bound by residues D389, 401–404 (YGGR), and K503. K503 provides a ligand contact to D-alanine.

This sequence belongs to the ATP-dependent AMP-binding enzyme family. DltA subfamily.

The protein resides in the cytoplasm. The enzyme catalyses holo-[D-alanyl-carrier protein] + D-alanine + ATP = D-alanyl-[D-alanyl-carrier protein] + AMP + diphosphate. It participates in cell wall biogenesis; lipoteichoic acid biosynthesis. In terms of biological role, catalyzes the first step in the D-alanylation of lipoteichoic acid (LTA), the activation of D-alanine and its transfer onto the D-alanyl carrier protein (Dcp) DltC. In an ATP-dependent two-step reaction, forms a high energy D-alanyl-AMP intermediate, followed by transfer of the D-alanyl residue as a thiol ester to the phosphopantheinyl prosthetic group of the Dcp. D-alanylation of LTA plays an important role in modulating the properties of the cell wall in Gram-positive bacteria, influencing the net charge of the cell wall. The protein is D-alanine--D-alanyl carrier protein ligase of Streptococcus pneumoniae serotype 4 (strain ATCC BAA-334 / TIGR4).